A 527-amino-acid chain; its full sequence is V-set and immunoglobulin domain-containing protein 10 (527 aa).

Positions 1 to 13 (MWTRRWIQFLVLC) are cleaved as a signal peptide. Ig-like C2-type domains lie at 14 to 111 (LHLW…LKVS), 123 to 212 (PTRT…RQLL), 216 to 306 (PPIT…CQIQ), and 310 to 399 (PLLE…KEIN). Topologically, residues 23-409 (YLGVFRGDVN…VWLTVNKPHN (387 aa)) are extracellular. 16 N-linked (GlcNAc...) asparagine glycosylation sites follow: asparagine 32, asparagine 41, asparagine 52, asparagine 64, asparagine 74, asparagine 90, asparagine 129, asparagine 139, asparagine 191, asparagine 206, asparagine 226, asparagine 260, asparagine 276, asparagine 325, asparagine 346, and asparagine 375. A disulfide bridge links cysteine 144 with cysteine 194. The cysteines at positions 238 and 288 are disulfide-linked. An intrachain disulfide couples cysteine 330 to cysteine 387. The helical transmembrane segment at 410–430 (IVGLVTALLLLFLLVVAIITG) threads the bilayer. The Cytoplasmic segment spans residues 431-527 (TVLYCDPQIY…TGEENQNEEI (97 aa)). Residues 501 to 527 (RPPESTSSDLFSEVSDDTGEENQNEEI) are disordered. A compositionally biased stretch (acidic residues) spans 514 to 527 (VSDDTGEENQNEEI).

It localises to the membrane. This is V-set and immunoglobulin domain-containing protein 10 (vsig10) from Xenopus laevis (African clawed frog).